The chain runs to 269 residues: 4-hydroxy-tetrahydrodipicolinate reductase (269 aa).

NAD(+) contacts are provided by residues 9-14 (GAGGRM) and Glu-35. Arg-36 serves as a coordination point for NADP(+). NAD(+) is bound by residues 98-100 (GTT) and 122-125 (ASNY). The active-site Proton donor/acceptor is His-155. His-156 serves as a coordination point for (S)-2,3,4,5-tetrahydrodipicolinate. The active-site Proton donor is Lys-159. 165 to 166 (GT) is a binding site for (S)-2,3,4,5-tetrahydrodipicolinate.

It belongs to the DapB family.

It localises to the cytoplasm. The catalysed reaction is (S)-2,3,4,5-tetrahydrodipicolinate + NAD(+) + H2O = (2S,4S)-4-hydroxy-2,3,4,5-tetrahydrodipicolinate + NADH + H(+). It catalyses the reaction (S)-2,3,4,5-tetrahydrodipicolinate + NADP(+) + H2O = (2S,4S)-4-hydroxy-2,3,4,5-tetrahydrodipicolinate + NADPH + H(+). Its pathway is amino-acid biosynthesis; L-lysine biosynthesis via DAP pathway; (S)-tetrahydrodipicolinate from L-aspartate: step 4/4. In terms of biological role, catalyzes the conversion of 4-hydroxy-tetrahydrodipicolinate (HTPA) to tetrahydrodipicolinate. The polypeptide is 4-hydroxy-tetrahydrodipicolinate reductase (Actinobacillus pleuropneumoniae serotype 3 (strain JL03)).